The chain runs to 1266 residues: Rho GTPase-activating protein 29 (1266 aa).

Serine 171, serine 176, serine 179, and serine 190 each carry phosphoserine. In terms of domain architecture, F-BAR spans 192-462 (IELDNLLLKN…SAKLYDPGQE (271 aa)). Residues 296 to 418 (RKNEMEKQRK…EILTQLRTLV (123 aa)) are a coiled coil. The disordered stretch occupies residues 482–501 (NVNKQMTNSPQTSGYEPADS). The span at 483 to 495 (VNKQMTNSPQTSG) shows a compositional bias: polar residues. Residues serine 501, serine 521, and serine 554 each carry the phosphoserine modification. Residues 542 to 561 (DSESTGGSSESRSLDSESIS) are compositionally biased toward low complexity. A disordered region spans residues 542-601 (DSESTGGSSESRSLDSESISPGDFHRKLPRTPSSGTMSSADDLDEREPPSPSEAGPNSLG). The segment at 614-659 (THKFRKLRSPTKCRDCDGIVMFPGVECEECLLVCHRKCLENLVIIC) adopts a Phorbol-ester/DAG-type zinc-finger fold. A Rho-GAP domain is found at 673 to 888 (AEFIQVAKKE…FLITYSQKIF (216 aa)). A phosphoserine mark is found at serine 920, serine 956, and serine 1028. Disordered regions lie at residues 1039–1081 (SSPT…KVNG), 1116–1157 (GLTV…ATAV), and 1209–1266 (KSDP…PQFV). The segment covering 1072 to 1081 (SNTTRSKVNG) has biased composition (polar residues). The segment covering 1124–1136 (NRDHPGSKAHAEP) has biased composition (basic and acidic residues). Serine 1149 and serine 1151 each carry phosphoserine. A compositionally biased stretch (acidic residues) spans 1256 to 1266 (EDLEDEIPQFV). The tract at residues 1263–1266 (PQFV) is interaction with PTPN13/PTPL1.

Interacts with PTPN13/PTPL1. Interacts with RAP2A via its coiled coil domain. Interacts with RASIP1.

Its function is as follows. GTPase activator for the Rho-type GTPases by converting them to an inactive GDP-bound state. Has strong activity toward RHOA, and weaker activity toward RAC1 and CDC42. May act as a specific effector of RAP2A to regulate Rho. In concert with RASIP1, suppresses RhoA signaling and dampens ROCK and MYH9 activities in endothelial cells and plays an essential role in blood vessel tubulogenesis. This chain is Rho GTPase-activating protein 29 (Arhgap29), found in Mus musculus (Mouse).